Consider the following 366-residue polypeptide: Endophilin-A (366 aa).

The BAR domain maps to 18–248 (TEKMGGAEGT…LQEKRSEAES (231 aa)). Residues 227 to 247 (QCADVLRGLQETLQEKRSEAE) adopt a coiled-coil conformation. The segment at 266-295 (GGGGGLNEDGTPSHISSSASPLPSPMRSPA) is disordered. Over residues 277–294 (PSHISSSASPLPSPMRSP) the composition is skewed to low complexity. Residues 305 to 364 (QQQPCCQALYDFDPENPGELGFKENDIITLLNRVDDNWYEGSVNGRTGYFPQSYVQVQVP) form the SH3 domain.

Belongs to the endophilin family.

Its subcellular location is the cytoplasm. It is found in the membrane. Required presynaptically at the neuromuscular junction. Implicated in synaptic vesicle endocytosis. The chain is Endophilin-A from Drosophila willistoni (Fruit fly).